The following is a 310-amino-acid chain: UDP-N-acetylenolpyruvoylglucosamine reductase (310 aa).

The region spanning Lys-23–Gly-188 is the FAD-binding PCMH-type domain. Arg-168 is an active-site residue. The active-site Proton donor is Ser-217. Residue Glu-287 is part of the active site.

This sequence belongs to the MurB family. It depends on FAD as a cofactor.

It is found in the cytoplasm. The enzyme catalyses UDP-N-acetyl-alpha-D-muramate + NADP(+) = UDP-N-acetyl-3-O-(1-carboxyvinyl)-alpha-D-glucosamine + NADPH + H(+). The protein operates within cell wall biogenesis; peptidoglycan biosynthesis. Functionally, cell wall formation. The sequence is that of UDP-N-acetylenolpyruvoylglucosamine reductase from Rickettsia bellii (strain OSU 85-389).